The chain runs to 344 residues: Lipase chaperone (344 aa).

Residues 14–34 form a helical membrane-spanning segment; the sequence is VAVYGAVGLAAIAGVAIWSGA.

The protein belongs to the lipase chaperone family.

The protein localises to the cell inner membrane. Its function is as follows. May be involved in the folding of the extracellular lipase during its passage through the periplasm. The chain is Lipase chaperone from Burkholderia ambifaria (strain MC40-6).